Here is a 227-residue protein sequence, read N- to C-terminus: NADH-quinone oxidoreductase subunit C (227 aa).

This sequence belongs to the complex I 30 kDa subunit family. As to quaternary structure, NDH-1 is composed of 14 different subunits. Subunits NuoB, C, D, E, F, and G constitute the peripheral sector of the complex.

It is found in the cell inner membrane. It carries out the reaction a quinone + NADH + 5 H(+)(in) = a quinol + NAD(+) + 4 H(+)(out). In terms of biological role, NDH-1 shuttles electrons from NADH, via FMN and iron-sulfur (Fe-S) centers, to quinones in the respiratory chain. The immediate electron acceptor for the enzyme in this species is believed to be ubiquinone. Couples the redox reaction to proton translocation (for every two electrons transferred, four hydrogen ions are translocated across the cytoplasmic membrane), and thus conserves the redox energy in a proton gradient. The sequence is that of NADH-quinone oxidoreductase subunit C from Legionella pneumophila subsp. pneumophila (strain Philadelphia 1 / ATCC 33152 / DSM 7513).